Here is a 126-residue protein sequence, read N- to C-terminus: Profilin (126 aa).

The protein belongs to the profilin family. As to quaternary structure, occurs in many kinds of cells as a complex with monomeric actin in a 1:1 ratio. As to expression, expressed in ovary and head.

Its subcellular location is the cytoplasm. The protein resides in the cytoskeleton. Its function is as follows. Binds to actin and affects the structure of the cytoskeleton. At high concentrations, profilin prevents the polymerization of actin, whereas it enhances it at low concentrations. By binding to PIP2, it may inhibit the formation of IP3 and DG. This profilin is required for intercellular cytoplasm transport during Drosophila oogenesis. Function in neurons is essential for adult survival, and is important for climbing behavior and activity. The chain is Profilin (chic) from Drosophila melanogaster (Fruit fly).